Consider the following 154-residue polypeptide: Putative gene 41 protein (154 aa).

The protein is Putative gene 41 protein (41) of Bacillus phage SP01 (Bacteriophage SP01).